Here is a 179-residue protein sequence, read N- to C-terminus: Peptide deformylase (179 aa).

Residues cysteine 102 and histidine 144 each coordinate Fe cation. Glutamate 145 is a catalytic residue. Residue histidine 148 participates in Fe cation binding.

This sequence belongs to the polypeptide deformylase family. It depends on Fe(2+) as a cofactor.

The catalysed reaction is N-terminal N-formyl-L-methionyl-[peptide] + H2O = N-terminal L-methionyl-[peptide] + formate. Its function is as follows. Removes the formyl group from the N-terminal Met of newly synthesized proteins. Requires at least a dipeptide for an efficient rate of reaction. N-terminal L-methionine is a prerequisite for activity but the enzyme has broad specificity at other positions. The chain is Peptide deformylase from Wolbachia sp. subsp. Brugia malayi (strain TRS).